We begin with the raw amino-acid sequence, 466 residues long: ATP synthase subunit beta (466 aa).

Position 155–162 (155–162) interacts with ATP; the sequence is GGAGVGKT.

This sequence belongs to the ATPase alpha/beta chains family. As to quaternary structure, F-type ATPases have 2 components, CF(1) - the catalytic core - and CF(0) - the membrane proton channel. CF(1) has five subunits: alpha(3), beta(3), gamma(1), delta(1), epsilon(1). CF(0) has three main subunits: a(1), b(2) and c(9-12). The alpha and beta chains form an alternating ring which encloses part of the gamma chain. CF(1) is attached to CF(0) by a central stalk formed by the gamma and epsilon chains, while a peripheral stalk is formed by the delta and b chains.

It localises to the cell inner membrane. The enzyme catalyses ATP + H2O + 4 H(+)(in) = ADP + phosphate + 5 H(+)(out). Its function is as follows. Produces ATP from ADP in the presence of a proton gradient across the membrane. The catalytic sites are hosted primarily by the beta subunits. The sequence is that of ATP synthase subunit beta from Bordetella avium (strain 197N).